A 348-amino-acid polypeptide reads, in one-letter code: tRNA-specific 2-thiouridylase MnmA (348 aa).

Residues 8–15 (LLSGGVDS) and methionine 34 each bind ATP. The active-site Nucleophile is cysteine 105. Cysteine 105 and cysteine 197 are oxidised to a cystine. ATP is bound at residue glycine 129. The interaction with tRNA stretch occupies residues 147-149 (KDQ). Cysteine 197 serves as the catalytic Cysteine persulfide intermediate.

Belongs to the MnmA/TRMU family.

It is found in the cytoplasm. It catalyses the reaction S-sulfanyl-L-cysteinyl-[protein] + uridine(34) in tRNA + AH2 + ATP = 2-thiouridine(34) in tRNA + L-cysteinyl-[protein] + A + AMP + diphosphate + H(+). Its function is as follows. Catalyzes the 2-thiolation of uridine at the wobble position (U34) of tRNA, leading to the formation of s(2)U34. The protein is tRNA-specific 2-thiouridylase MnmA of Fervidobacterium nodosum (strain ATCC 35602 / DSM 5306 / Rt17-B1).